A 352-amino-acid polypeptide reads, in one-letter code: Minor capsid protein VP2 (352 aa).

A lipid anchor (N-myristoyl glycine; by host) is attached at Gly2. The D1 stretch occupies residues 273–308 (SGEFIEKTLAPGGANQRIAPQWMLPLLLGLYGTVTP). The helical transmembrane segment at 290-310 (IAPQWMLPLLLGLYGTVTPAL) threads the bilayer. The interval 312–352 (AYEDAPSKKKRRMSRGSSQKAKGPRASSKTSYKRRRRSTRS) is disordered. Residues 313–352 (YEDAPSKKKRRMSRGSSQKAKGPRASSKTSYKRRRRSTRS) are DNA-binding. The Nuclear localization signal motif lies at 316 to 324 (APSKKKRRM). The span at 342–352 (SYKRRRRSTRS) shows a compositional bias: basic residues.

This sequence belongs to the polyomaviruses capsid protein VP2 family. Forms homooligomers, and heterooligomers with VP3 in the endoplasmic reticulum membrane. Interacts (via D1 domain) with VP1. In terms of assembly, interacts (via D1 domain) with VP1.

The protein localises to the virion. It is found in the host nucleus. The protein resides in the host endoplasmic reticulum. Its subcellular location is the host endoplasmic reticulum membrane. Structural protein that resides within the core of the capsid surrounded by 72 VP1 pentamers. Participates in host cell receptor binding together with VP1. Following virus endocytosis and trafficking to the endoplasmic reticulum, VP2 and VP3 form oligomers and integrate into the endoplasmic reticulum membrane. Heterooligomer VP2-VP3 may create a viroporin for transporting the viral genome across the endoplasmic reticulum membrane to the cytoplasm. Nuclear entry of the viral DNA involves the selective exposure and importin recognition of VP2 or VP3 nuclear localization signal (shared C-terminus). Plays a role in virion assembly within the nucleus in particular through a DNA-binding domain located in the C-terminal region. An N-terminal myristoylation suggests a scaffold function for virion assembly. Its function is as follows. Structural protein that resides within the core of the capsid surrounded by 72 VP1 pentamers. Following virus endocytosis and trafficking to the endoplasmic reticulum, VP2 and VP3 form oligomers and integrate into the endoplasmic reticulum membrane. Heterooligomer VP2-VP3 may create a viroporin for transporting the viral genome across the endoplasmic reticulum membrane to the cytoplasm. Nuclear entry of the viral DNA involves the selective exposure and importin recognition of VP2 or VP3 nuclear localization signal (shared C-terminus). Plays a role in virion assembly within the nucleus. May participate in host cell lysis when associated with VP4. Functionally, viroporin inducing perforation of cellular membranes to trigger virus progeny release. Forms pores of 3 nm inner diameter. VP4 is expressed about 24 hours after the late structural proteins and is not incorporated into the mature virion. The sequence is that of Minor capsid protein VP2 from Simian virus 12 (strain wt100) (SV-12).